A 222-amino-acid chain; its full sequence is Ribosomal RNA small subunit methyltransferase I (222 aa).

This sequence belongs to the methyltransferase superfamily. RsmI family.

The protein resides in the cytoplasm. The enzyme catalyses cytidine(1402) in 16S rRNA + S-adenosyl-L-methionine = 2'-O-methylcytidine(1402) in 16S rRNA + S-adenosyl-L-homocysteine + H(+). Catalyzes the 2'-O-methylation of the ribose of cytidine 1402 (C1402) in 16S rRNA. In Mycoplasmopsis pulmonis (strain UAB CTIP) (Mycoplasma pulmonis), this protein is Ribosomal RNA small subunit methyltransferase I.